A 555-amino-acid polypeptide reads, in one-letter code: (+)-delta-cadinene synthase isozyme A (555 aa).

The disordered stretch occupies residues 1-22 (MASQASQVLASPHPAISSENRP). Positions 308, 312, 452, and 456 each coordinate Mg(2+). Residues 308–312 (DDTYD) carry the DDXXD motif motif.

The protein belongs to the terpene synthase family. It depends on Mg(2+) as a cofactor.

It catalyses the reaction (2E,6E)-farnesyl diphosphate = (1S,8aR)-delta-cadinene + diphosphate. It participates in secondary metabolite biosynthesis; terpenoid biosynthesis. Its function is as follows. Responsible for the cyclization of trans,trans-farnesyl diphosphate (FPP) to (+)-delta cadinene. The chain is (+)-delta-cadinene synthase isozyme A (CAD1-A) from Gossypium arboreum (Tree cotton).